We begin with the raw amino-acid sequence, 147 residues long: Large ribosomal subunit protein uL15 (147 aa).

The disordered stretch occupies residues 1–55 (MKLHEIAPQPGSTKRRRRVGRGVSAGQGASCGLGMRGQKSRSGTGTRPGFEGGQM). A compositionally biased stretch (gly residues) spans 23–35 (VSAGQGASCGLGM).

This sequence belongs to the universal ribosomal protein uL15 family. In terms of assembly, part of the 50S ribosomal subunit.

In terms of biological role, binds to the 23S rRNA. The protein is Large ribosomal subunit protein uL15 of Microcystis aeruginosa (strain NIES-843 / IAM M-2473).